The following is a 1207-amino-acid chain: MGLDNPTVVTGQNVQFSYDMASSSKKSRNKKKKSKPSIKEPQSAPLLAVETESVEETHPQAELYDSEADYPSSRVIRRAANGDVIVESLNEAGSGVQAQQAQQQKHSAISSKLVAHWESLSPEEKRKILSISKEEVFSVTKSYQTLHNCNCTVCGRRHVPMEQELESIYNQLYEMARQDNPNSDFVLFHLNLIKELQRGTSSGAEQRTASLQSRGASFLDNMRDEAVKYCISNEGVDRLKEEVLQFKHNKQRQYSEQQRKQQLPPVHTHNSPSDSPSIDELPEREQESLLHTLPDELGPDSSEVNEQLREKYLKFAKTFVSSHPKIAQEYVNRMMMYPDMRALTEDLIKNNGQDFVKAMEAFVSSQQDGPLPGSPEHTKLTAEQFQELQKQLVEKAGLDMSQSPVPTNDDPPQDCTDTDEIDTDLRGRVLLKQFMAGESIINQAFKSLQGSNKNQLKKSVSHSSQGLPEDSEYDEDLNYSDSYDDEDSPYDDDVYDDNDAESYDEDDDSHHKHHHQQHLHHHHREQDAEADDYDSDIDQQERLEEGRGLIQIAITKLLQRKLIVSYQEKQAERNRERLLLELEAEEQQKKEKEEKKLKKKEKEKEKKRQMQLAKEEEKRKQVEEEARLKQEAEAREMQRRENQRKKVEEAKRKKDLEMRKRLEEQRRREEEQERQRRMKEEIKRKRDQERKQREEEQRKRKQEKELKKLQSLEVKKKREEDDKPTEESSQEDNLHKENISHDLLNQLAHPAGGVPYGIVPVKQEMSEEKTVNDDIFNMINEATSKSISTSKSISTSPSHFNALLQKGIPRKSIDTSSIGLNYASAQAALPQPLSFPVDLTEALGFAQKTQVQTSISGPPGLSKNTAASSWDNVPGYVQLSPKSVTQNHSNVQVQTTPHGSVPGQHRASYSTFGASVDPNDTFSGDLTNLTNFLVQTKLEDVSTSAPLHSVSSSTTALPRGETSIYGNNLWNNEQPHIGSLISSHASGPSTQAPLHPRRSIWDNNASVNNYAADLWGNTSSNSTPIAPSTAVASSMVSAHQASATDVIIQAYTLLSTSGGFVPIDVLYQNCLSYLTDKGSFTFGQFVGQLLALRNANECEVLSNDVGMMTHCRFTTPQLQSTLYAPAAAPGGSDLPPRQPSKGLFSDPVSTSTVGLTTIPVLSTSTGSTSSATPTGSIALGQPSSGQSNFFDFNQQLAQPSRANNIWG.

Disordered stretches follow at residues 1-58 (MGLD…EETH), 248-284 (HNKQRQYSEQQRKQQLPPVHTHNSPSDSPSIDELPER), 398-420 (LDMSQSPVPTNDDPPQDCTDTDE), 451-535 (SNKN…DYDS), 586-735 (EQQK…DNLH), 1124-1148 (APAAAPGGSDLPPRQPSKGLFSDPV), and 1163-1183 (TSTGSTSSATPTGSIALGQPS). Residues 7–16 (TVVTGQNVQF) are compositionally biased toward polar residues. Over residues 25 to 36 (KKSRNKKKKSKP) the composition is skewed to basic residues. Positions 252–262 (RQYSEQQRKQQ) are enriched in low complexity. Residues 469 to 507 (EDSEYDEDLNYSDSYDDEDSPYDDDVYDDNDAESYDEDD) show a composition bias toward acidic residues. Residues 511–523 (HKHHHQQHLHHHH) show a composition bias toward basic residues. The stretch at 564 to 727 (VSYQEKQAER…REEDDKPTEE (164 aa)) forms a coiled coil. The span at 586–721 (EQQKKEKEEK…LEVKKKREED (136 aa)) shows a compositional bias: basic and acidic residues. Positions 1163-1176 (TSTGSTSSATPTGS) are enriched in low complexity.

This sequence belongs to the NST1 family.

Its subcellular location is the cytoplasm. May act as a negative regulator of salt tolerance. The sequence is that of Stress response protein NST1 (NST1) from Eremothecium gossypii (strain ATCC 10895 / CBS 109.51 / FGSC 9923 / NRRL Y-1056) (Yeast).